A 70-amino-acid polypeptide reads, in one-letter code: U2-agatoxin-Ao1m (70 aa).

The N-terminal stretch at 1–20 (MRAIISLFLISAMVFSMIQA) is a signal peptide. The propeptide occupies 21-34 (VPEEXGLQLSEDER). Intrachain disulfides connect Cys37–Cys53, Cys44–Cys58, and Cys52–Cys68. Leu69 is modified (leucine amide).

The protein belongs to the neurotoxin 01 (U2-agtx) family. As to expression, expressed by the venom gland.

The protein localises to the secreted. Functionally, insect active toxin causing rapid but reversible paralysis in crickets. No activity shown in mammals. Does not show effect on mammalian voltage-gated calcium channels. This is U2-agatoxin-Ao1m from Agelena orientalis (Funnel-web spider).